The sequence spans 655 residues: Methyl-accepting chemotaxis protein McpC (655 aa).

Residues 1–8 (MFKKLHMK) lie on the Cytoplasmic side of the membrane. The chain crosses the membrane as a helical span at residues 9 to 29 (IAVFVSIMLIITVVLLMLSSY). Residues 30 to 276 (LTLKPMITED…LMWISDKMNR (247 aa)) lie on the Extracellular side of the membrane. One can recognise a Cache domain in the interval 148–225 (WTEPYKDVVT…SNQGKNISKD (78 aa)). Residues 277–297 (ANLWISLIALIITIILSYFLA) traverse the membrane as a helical segment. The 53-residue stretch at 298 to 350 (KTITGPIQQLIVKTKAVSAGDLTVRAESKSKDEVGILTRDFNLMVENMKEMVE) folds into the HAMP domain. At 298 to 655 (KTITGPIQQL…LMNTIAKFTL (358 aa)) the chain is on the cytoplasmic side. The Methyl-accepting transducer domain maps to 369-619 (VAAETNETSG…ESAAAAEEVN (251 aa)).

The protein belongs to the methyl-accepting chemotaxis (MCP) protein family. Interacts with FloT. Some glutamine residues are deamidated to glutamate by CheD and subsequently methylated.

The protein localises to the cell membrane. It is found in the membrane raft. In terms of biological role, chemotactic-signal transducers respond to changes in the concentration of attractants and repellents in the environment, transduce a signal from the outside to the inside of the cell, and facilitate sensory adaptation through the variation of the level of methylation. All amino acids serve as attractants in B.subtilis, they appear to cause an increase in the turnover methyl groups, leading to methylation of an unidentified acceptor, while repellents have been shown to cause a decrease in methyl group turnover. The methyl groups are added by a methyltransferase and removed by a methylesterase. McpC is required for taxis to cysteine, proline, threonine, glycine, serine, lysine, valine and arginine and for aspartate, glutamine, histidine and glutamate. Primarily mediates response to positive stimulus of PTS carbohydrates. Greatly influences the duration or magnitude of the response to negative PTS carbohydrate stimulus. The polypeptide is Methyl-accepting chemotaxis protein McpC (mcpC) (Bacillus subtilis (strain 168)).